The sequence spans 473 residues: MVYENPDGVMVGLEVHVQLNNLNTKMFCGCSTQYHDSEPNTHVCPVCMGLPGALPVINKRAVESAIKIGMALNCEVVEQTQFHRKNYYYPDLPKGFQTTQYDFPIVGNGKVVIEGEDGEHVVRITRAHMEEDPGKLVHIGSIDKSKGTLIDYNRSGMALIEIVSEPDMRSPKEARRYLDKLRNILDYLDVFNGDLEGSMRVDANVSVMGGQRAEVKNISSHKGAERAILYEIMRQKNLLRRGGEVVMETRHFDEARGVTISMRTKEGEHDYRYFPEPDLVPMRVSDWAPAIREELPELPDAKRARLISEYDITEMHAKALTSDIRVADFYEVVAAAVEPRVAGTWVADVLKGELNYRDLSVDSFTTDDIIQIIKLVVEDKVTEQSAVDVIRTILDDGGTPMEVVTEKGLLKVKGDVVTEAVSETIAENEAAVQDYLGGAEKSLNFLVGQVMKKTKGRADARQARELLVAALKS.

It belongs to the GatB/GatE family. GatB subfamily. Heterotrimer of A, B and C subunits.

It carries out the reaction L-glutamyl-tRNA(Gln) + L-glutamine + ATP + H2O = L-glutaminyl-tRNA(Gln) + L-glutamate + ADP + phosphate + H(+). The catalysed reaction is L-aspartyl-tRNA(Asn) + L-glutamine + ATP + H2O = L-asparaginyl-tRNA(Asn) + L-glutamate + ADP + phosphate + 2 H(+). In terms of biological role, allows the formation of correctly charged Asn-tRNA(Asn) or Gln-tRNA(Gln) through the transamidation of misacylated Asp-tRNA(Asn) or Glu-tRNA(Gln) in organisms which lack either or both of asparaginyl-tRNA or glutaminyl-tRNA synthetases. The reaction takes place in the presence of glutamine and ATP through an activated phospho-Asp-tRNA(Asn) or phospho-Glu-tRNA(Gln). In Methanococcoides burtonii (strain DSM 6242 / NBRC 107633 / OCM 468 / ACE-M), this protein is Aspartyl/glutamyl-tRNA(Asn/Gln) amidotransferase subunit B.